Reading from the N-terminus, the 364-residue chain is Probable dual-specificity RNA methyltransferase RlmN (364 aa).

Glu-106 (proton acceptor) is an active-site residue. The Radical SAM core domain occupies 112-350 (YPQRNTVCIS…SCTVRDTRGR (239 aa)). A disulfide bond links Cys-119 and Cys-356. Cys-126, Cys-130, and Cys-133 together coordinate [4Fe-4S] cluster. Residues 177–178 (GE), Ser-211, 234–236 (SLH), and Asn-313 each bind S-adenosyl-L-methionine. Cys-356 serves as the catalytic S-methylcysteine intermediate.

The protein belongs to the radical SAM superfamily. RlmN family. The cofactor is [4Fe-4S] cluster.

The protein resides in the cytoplasm. The enzyme catalyses adenosine(2503) in 23S rRNA + 2 reduced [2Fe-2S]-[ferredoxin] + 2 S-adenosyl-L-methionine = 2-methyladenosine(2503) in 23S rRNA + 5'-deoxyadenosine + L-methionine + 2 oxidized [2Fe-2S]-[ferredoxin] + S-adenosyl-L-homocysteine. It catalyses the reaction adenosine(37) in tRNA + 2 reduced [2Fe-2S]-[ferredoxin] + 2 S-adenosyl-L-methionine = 2-methyladenosine(37) in tRNA + 5'-deoxyadenosine + L-methionine + 2 oxidized [2Fe-2S]-[ferredoxin] + S-adenosyl-L-homocysteine. Functionally, specifically methylates position 2 of adenine 2503 in 23S rRNA and position 2 of adenine 37 in tRNAs. The chain is Probable dual-specificity RNA methyltransferase RlmN from Mycobacterium ulcerans (strain Agy99).